Here is a 670-residue protein sequence, read N- to C-terminus: NADH-ubiquinone oxidoreductase chain 5 (670 aa).

Helical transmembrane passes span 1–21, 31–51, 81–101, 111–131, 133–153, 178–198, 211–231, 251–271, 283–303, 311–331, 339–359, 375–395, 421–441, 462–482, 519–539, 566–586, 594–614, 629–649, and 650–670; these read MYIV…IFGH, IAVG…YEIL, LTSI…LYSM, TRFF…VTAD, FVQL…LINF, LFFG…SVIF, LLGY…IGVV, TPVS…FLVL, ILNI…TIGI, VIAY…GLLN, LTTH…VIHG, LMPL…GFPF, AIIG…LLIL, TNMV…GYVT, LLPL…YFNI, FDFL…YDVM, LWEK…FTAL, IVQT…TGFI, and YMEL…IKID.

It belongs to the complex I subunit 5 family.

It is found in the mitochondrion inner membrane. The enzyme catalyses a ubiquinone + NADH + 5 H(+)(in) = a ubiquinol + NAD(+) + 4 H(+)(out). Its function is as follows. Core subunit of the mitochondrial membrane respiratory chain NADH dehydrogenase (Complex I) that is believed to belong to the minimal assembly required for catalysis. Complex I functions in the transfer of electrons from NADH to the respiratory chain. The immediate electron acceptor for the enzyme is believed to be ubiquinone. The protein is NADH-ubiquinone oxidoreductase chain 5 (nad5) of Dictyostelium discoideum (Social amoeba).